The following is a 148-amino-acid chain: Large ribosomal subunit protein bL9 (148 aa).

This sequence belongs to the bacterial ribosomal protein bL9 family.

Its function is as follows. Binds to the 23S rRNA. This is Large ribosomal subunit protein bL9 from Pseudomonas putida (strain ATCC 700007 / DSM 6899 / JCM 31910 / BCRC 17059 / LMG 24140 / F1).